A 653-amino-acid polypeptide reads, in one-letter code: Probable potassium transport system protein Kup (653 aa).

12 consecutive transmembrane segments (helical) span residues Ala-37 to Tyr-57, Val-79 to Val-99, Ile-134 to Ile-154, Ala-168 to Val-188, Ile-196 to Val-216, Leu-243 to Tyr-263, Trp-278 to Leu-298, Leu-320 to Phe-340, Ile-368 to Phe-388, Ala-397 to Ala-417, Trp-426 to Asn-446, and Val-450 to Thr-470.

The protein belongs to the HAK/KUP transporter (TC 2.A.72) family.

It localises to the cell inner membrane. It catalyses the reaction K(+)(in) + H(+)(in) = K(+)(out) + H(+)(out). Functionally, transport of potassium into the cell. Likely operates as a K(+):H(+) symporter. The protein is Probable potassium transport system protein Kup of Myxococcus xanthus (strain DK1622).